The following is a 366-amino-acid chain: HTH-type transcriptional regulator MSMEG_6044/MSMEI_5883 (366 aa).

The region spanning alanine 11–threonine 66 is the HTH lacI-type domain. Residues leucine 13–asparagine 32 constitute a DNA-binding region (H-T-H motif).

Transcriptional regulator that negatively regulates transcription of the mce4 operon, which is involved in cholesterol transport and utilization. Acts by binding to the promoter region of the mce4 operon. This Mycolicibacterium smegmatis (strain ATCC 700084 / mc(2)155) (Mycobacterium smegmatis) protein is HTH-type transcriptional regulator MSMEG_6044/MSMEI_5883.